The primary structure comprises 658 residues: MNNSTDAVNPAKKPQTRREKREAAEAFLKNVSDQSFPNSKKVYVQGEIHDIKVGMREITLSDTLVSGSKDKPVYEKNEPLCVYDTSGFYTDENVEIDVHKGIPRLRETWIDARDDVETFTSTHSEFAQQRLDDEGVDEIRFEHLPKMRIAKKGKNVTQMHYARQGIITPEMEYIAIRENLKREEVKDATLLLQHKGQSFGASIPEQITPEFVRDEVARGRAIIPVNINHPECEPMIIGRNFLIKVNANIGNSAVTSSIEEEVEKLVWSTKWGADTVMDLSTGRNIHETREWIMRNSPVPIGTVPIYQALEKVNGVAEDLTWEIFRDTLIEQAEQGVDYFTIHAGVLLRYVPMTAKRVTGIVSRGGSIMAKWCLAHHKENFLYTHFEDICEILKQYDVSFSLGDGLRPGSVADANDEAQFAELHTLGELTKIAWKHDVQTIIEGPGHVPLHMIKENMEEQLEHCGEAPFYTLGPLTTDIAPGYDHITSGIGAANIGWYGCAMLCYVTPKEHLGLPNKEDVKEGLMTYKIAAHAGDLAKGHPGAQIRDNAMSKARFEFRWYDQFNIGLDPERARTYHDETLPQESGKVAHFCSMCGPKFCSMKISQEVREYAANLDKNAIKIQLLDETITLTSDEAIERAMQEKSAEFKATGSEIYQLAE.

The disordered stretch occupies residues 1–22; it reads MNNSTDAVNPAKKPQTRREKRE. Residues N248, M277, Y306, H342, 362–364, 403–406, and E442 contribute to the substrate site; these read SRG and DGLR. H446 is a Zn(2+) binding site. Y469 lines the substrate pocket. Position 510 (H510) interacts with Zn(2+). Positions 590, 593, and 598 each coordinate [4Fe-4S] cluster.

It belongs to the ThiC family. In terms of assembly, homodimer. [4Fe-4S] cluster serves as cofactor.

It catalyses the reaction 5-amino-1-(5-phospho-beta-D-ribosyl)imidazole + S-adenosyl-L-methionine = 4-amino-2-methyl-5-(phosphooxymethyl)pyrimidine + CO + 5'-deoxyadenosine + formate + L-methionine + 3 H(+). The protein operates within cofactor biosynthesis; thiamine diphosphate biosynthesis. Functionally, catalyzes the synthesis of the hydroxymethylpyrimidine phosphate (HMP-P) moiety of thiamine from aminoimidazole ribotide (AIR) in a radical S-adenosyl-L-methionine (SAM)-dependent reaction. This chain is Phosphomethylpyrimidine synthase, found in Colwellia psychrerythraea (strain 34H / ATCC BAA-681) (Vibrio psychroerythus).